Reading from the N-terminus, the 708-residue chain is Chaperonin-containing T-complex member BBS12 (708 aa).

Belongs to the TCP-1 chaperonin family. BBS12 subfamily. Component of the chaperonin-containing T-complex (TRiC), a heterooligomeric complex of about 850 to 900 kDa that forms two stacked rings, 12 to 16 nm in diameter. Interacts with MKKS.

The protein resides in the cell projection. Its subcellular location is the cilium. Its function is as follows. Component of the chaperonin-containing T-complex (TRiC), a molecular chaperone complex that assists the folding of proteins upon ATP hydrolysis. As part of the TRiC complex may play a role in the assembly of BBSome, a complex involved in ciliogenesis regulating transports vesicles to the cilia. Involved in adipogenic differentiation. The polypeptide is Chaperonin-containing T-complex member BBS12 (Bbs12) (Mus musculus (Mouse)).